The chain runs to 269 residues: Tryptophan synthase alpha chain (269 aa).

Active-site proton acceptor residues include Glu45 and Asp56.

Belongs to the TrpA family. As to quaternary structure, tetramer of two alpha and two beta chains.

The enzyme catalyses (1S,2R)-1-C-(indol-3-yl)glycerol 3-phosphate + L-serine = D-glyceraldehyde 3-phosphate + L-tryptophan + H2O. It participates in amino-acid biosynthesis; L-tryptophan biosynthesis; L-tryptophan from chorismate: step 5/5. In terms of biological role, the alpha subunit is responsible for the aldol cleavage of indoleglycerol phosphate to indole and glyceraldehyde 3-phosphate. This Shouchella clausii (strain KSM-K16) (Alkalihalobacillus clausii) protein is Tryptophan synthase alpha chain.